The following is a 316-amino-acid chain: Pantothenate kinase (316 aa).

95–102 provides a ligand contact to ATP; sequence GSVAVGKS.

It belongs to the prokaryotic pantothenate kinase family.

It localises to the cytoplasm. It carries out the reaction (R)-pantothenate + ATP = (R)-4'-phosphopantothenate + ADP + H(+). The protein operates within cofactor biosynthesis; coenzyme A biosynthesis; CoA from (R)-pantothenate: step 1/5. This Escherichia coli O17:K52:H18 (strain UMN026 / ExPEC) protein is Pantothenate kinase.